The sequence spans 892 residues: Zinc finger protein 473 homolog (892 aa).

One can recognise a KRAB domain in the interval 23–101 (ETLKDLAMDF…TKSSPLQSGF (79 aa)). Composition is skewed to polar residues over residues 66-76 (DTSQPSLTSQP) and 84-97 (ATST…SSPL). Disordered stretches follow at residues 66–97 (DTSQ…SSPL) and 134–203 (GDPE…DSVQ). 2 stretches are compositionally biased toward basic and acidic residues: residues 138–156 (SLPR…HQSP) and 190–203 (KESR…DSVQ). C2H2-type zinc fingers lie at residues 209–231 (YKCS…WVLH) and 265–287 (YTCQ…QKIH). Positions 297-308 (SDSNLEGLSRSP) are enriched in polar residues. The tract at residues 297 to 370 (SDSNLEGLSR…HPKPLRHQKT (74 aa)) is disordered. Basic and acidic residues-rich tracts occupy residues 313–323 (GKQRLSKDTDS) and 332–353 (QDQE…ESQP). C2H2-type zinc fingers lie at residues 377–399 (FRCK…QRAH), 404–426 (YKCA…RKSH), 432–454 (CECQ…QAIH), 460–482 (YKCD…QRIH), 488–510 (HKCS…QRVH), 516–538 (HQCP…RLRH), 544–566 (FGCA…NKIH), and 572–594 (YECK…LSIH). A Glycyl lysine isopeptide (Lys-Gly) (interchain with G-Cter in SUMO2) cross-link involves residue K476. A Glycyl lysine isopeptide (Lys-Gly) (interchain with G-Cter in SUMO2) cross-link involves residue K602. The segment at 697 to 719 (FKCDIYNRAFKQRAHLSKHQLIH) adopts a C2H2-type 11; degenerate zinc-finger fold. 6 C2H2-type zinc fingers span residues 725 to 747 (FKCN…QKTH), 753 to 775 (FECS…QKIH), 781 to 803 (FKCG…QRIH), 809 to 831 (YVCQ…LRIH), 837 to 859 (YTCG…ERIH), and 865 to 887 (YACG…QRIH).

Belongs to the krueppel C2H2-type zinc-finger protein family. As to quaternary structure, interacts with the SLBP/pre-mRNA complex but not with SLBP alone. Interacts with LSM11 in a U7 snRNP-dependent manner.

It localises to the nucleus. Its function is as follows. Involved in histone 3'-end pre-mRNA processing by associating with U7 snRNP and interacting with SLBP/pre-mRNA complex. Increases histone 3'-end pre-mRNA processing but has no effect on U7 snRNP levels, when overexpressed. Required for cell cycle progression from G1 to S phases. This Mus musculus (Mouse) protein is Zinc finger protein 473 homolog (Znf473).